The following is a 902-amino-acid chain: Cysteine-tryptophan domain-containing zinc finger protein 3 (902 aa).

Residues 21-74 (VLIEDNWVCCDMCHKWRLLPYGTNTSMLPKKWICSMLDWLPGMNKCDISEDETT) form a CW-type zinc finger. Positions 30, 33, 54, and 66 each coordinate Zn(2+). 4 disordered regions span residues 131 to 233 (EHDQ…EDRH), 326 to 345 (EDNR…NENL), 420 to 480 (QSST…LNAD), and 537 to 651 (HGPT…SASP). Composition is skewed to basic and acidic residues over residues 151–169 (KNRE…DPVS) and 193–203 (SHSDGGDLTEK). Over residues 204–213 (SKKHSKSKNR) the composition is skewed to basic residues. Composition is skewed to basic and acidic residues over residues 214–233 (RGID…EDRH) and 335–345 (HTSKGGDNENL). A compositionally biased stretch (low complexity) spans 421 to 433 (SSTVATSSSSKVS). 3 stretches are compositionally biased toward polar residues: residues 450–463 (ESVS…SNTD), 564–588 (NSAP…QIEM), and 599–611 (IDNQ…IGQD). Over residues 612 to 625 (NHSHMKEGKSEVHT) the composition is skewed to basic and acidic residues. Positions 634 to 648 (KNHTQLRSNVENGDS) are enriched in polar residues.

Expressed in leaf sheaths, flag leaves, nodes, internodes and panicles.

The protein resides in the nucleus. Its function is as follows. Binds to histones H3K4me1, H3K4me2 and H3K4me3 in GST pull-down assay. May facilitate the recruitment of effectors to mediate gene expression. The chain is Cysteine-tryptophan domain-containing zinc finger protein 3 from Oryza sativa subsp. japonica (Rice).